The following is a 349-amino-acid chain: MTKAPEGRRMLRVEARNSQTPIESKPRWIRTAVKTGPEYQDMKKKVSGASLHTVCQEAGCPNIHECWESREATFLIGGANCSRRCDFCQINSAKPEPLDRDEPRRVAESVREMQLNYSTITGVTRDDLEDEGAWLYAEVVRKIHELNPHTGVENLTPDFSGKPDLLQEVFEARPEVFAHNLETVPRIFKRIRPAFRYERSLDVIRQARDFGLVTKSNLILGMGETVDEIRDALVDLHSAGCDIITITQYLRPGPMYHPIDRWVKPEEFIDHADFARELGFGAVMSGPLVRSSYRAGKLYAEALAARGESLPENLAHLATTADGSTAQEANTLLEKYGPSQDTPVVSSKA.

[4Fe-4S] cluster-binding residues include Cys55, Cys60, Cys66, Cys81, Cys85, Cys88, and Ser292. The 215-residue stretch at 67–281 (WESREATFLI…ADFARELGFG (215 aa)) folds into the Radical SAM core domain.

The protein belongs to the radical SAM superfamily. Lipoyl synthase family. [4Fe-4S] cluster serves as cofactor.

The protein localises to the cytoplasm. It catalyses the reaction [[Fe-S] cluster scaffold protein carrying a second [4Fe-4S](2+) cluster] + N(6)-octanoyl-L-lysyl-[protein] + 2 oxidized [2Fe-2S]-[ferredoxin] + 2 S-adenosyl-L-methionine + 4 H(+) = [[Fe-S] cluster scaffold protein] + N(6)-[(R)-dihydrolipoyl]-L-lysyl-[protein] + 4 Fe(3+) + 2 hydrogen sulfide + 2 5'-deoxyadenosine + 2 L-methionine + 2 reduced [2Fe-2S]-[ferredoxin]. It participates in protein modification; protein lipoylation via endogenous pathway; protein N(6)-(lipoyl)lysine from octanoyl-[acyl-carrier-protein]: step 2/2. Catalyzes the radical-mediated insertion of two sulfur atoms into the C-6 and C-8 positions of the octanoyl moiety bound to the lipoyl domains of lipoate-dependent enzymes, thereby converting the octanoylated domains into lipoylated derivatives. This chain is Lipoyl synthase, found in Corynebacterium diphtheriae (strain ATCC 700971 / NCTC 13129 / Biotype gravis).